A 345-amino-acid chain; its full sequence is L-threonine 3-dehydrogenase (345 aa).

Cysteine 42 contacts Zn(2+). Active-site charge relay system residues include threonine 44 and histidine 47. Zn(2+) contacts are provided by histidine 67, glutamate 68, cysteine 97, cysteine 100, cysteine 103, and cysteine 111. NAD(+) is bound by residues isoleucine 179, aspartate 199, arginine 204, 266–268 (LGI), and 290–291 (IY).

It belongs to the zinc-containing alcohol dehydrogenase family. In terms of assembly, homotetramer. Zn(2+) serves as cofactor.

It localises to the cytoplasm. The catalysed reaction is L-threonine + NAD(+) = (2S)-2-amino-3-oxobutanoate + NADH + H(+). It participates in amino-acid degradation; L-threonine degradation via oxydo-reductase pathway; glycine from L-threonine: step 1/2. In terms of biological role, catalyzes the NAD(+)-dependent oxidation of L-threonine to 2-amino-3-ketobutyrate. This Sinorhizobium fredii (strain NBRC 101917 / NGR234) protein is L-threonine 3-dehydrogenase.